The sequence spans 438 residues: Trigger factor (438 aa).

The 86-residue stretch at 163–248 folds into the PPIase FKBP-type domain; sequence GDKLNIDFEG…VKRIETTEAR (86 aa).

Belongs to the FKBP-type PPIase family. Tig subfamily.

Its subcellular location is the cytoplasm. It carries out the reaction [protein]-peptidylproline (omega=180) = [protein]-peptidylproline (omega=0). Its function is as follows. Involved in protein export. Acts as a chaperone by maintaining the newly synthesized protein in an open conformation. Functions as a peptidyl-prolyl cis-trans isomerase. This is Trigger factor from Syntrophomonas wolfei subsp. wolfei (strain DSM 2245B / Goettingen).